Reading from the N-terminus, the 249-residue chain is 2-dehydro-3-deoxy-L-rhamnonate dehydrogenase (NAD(+)) (249 aa).

Residue Tyr-156 is the Proton acceptor of the active site.

The protein belongs to the short-chain dehydrogenases/reductases (SDR) family. Homotetramer.

The enzyme catalyses 2-dehydro-3-deoxy-L-rhamnonate + NAD(+) = 2,4-didehydro-3-deoxy-L-rhamnonate + NADH + H(+). It functions in the pathway carbohydrate degradation; L-rhamnose degradation. Catalyzes the NAD(+)-dependent dehydrogenation of 2-dehydro-3-deoxy-L-rhamnonate to form 2,4-didehydro-3-deoxy-L-rhamnonate. Does not show any detectable activity in the presence of NADP(+). Catalyzes the fourth step in an alternative pathway for rhamnose utilization that does not involve phosphorylated intermediates. In Sphingomonas sp. (strain SKA58), this protein is 2-dehydro-3-deoxy-L-rhamnonate dehydrogenase (NAD(+)).